The primary structure comprises 299 residues: Cytidine deaminase (299 aa).

CMP/dCMP-type deaminase domains follow at residues 56-176 (SKIE…FGPK) and 194-299 (LQGD…YIAV). 97 to 99 (NQE) lines the substrate pocket. His-110 serves as a coordination point for Zn(2+). Glu-112 serves as the catalytic Proton donor. Zn(2+)-binding residues include Cys-137 and Cys-140.

Belongs to the cytidine and deoxycytidylate deaminase family. Homodimer. Zn(2+) serves as cofactor.

The enzyme catalyses cytidine + H2O + H(+) = uridine + NH4(+). It carries out the reaction 2'-deoxycytidine + H2O + H(+) = 2'-deoxyuridine + NH4(+). This enzyme scavenges exogenous and endogenous cytidine and 2'-deoxycytidine for UMP synthesis. In Haemophilus ducreyi (strain 35000HP / ATCC 700724), this protein is Cytidine deaminase.